We begin with the raw amino-acid sequence, 198 residues long: Formate-dependent nitrite reductase complex subunit NrfG (198 aa).

2 TPR repeats span residues 73 to 106 and 144 to 177; these read SEQWALLGEYYLWQNDYSNSLLAYRQALQLRGEN and ITALMLLASDAFMQANYAQAIELWQKVMDLNSPR.

Its function is as follows. Required for formate-dependent nitrite reduction. Not required for the biosynthesis of any of the c-type cytochromes nor for the secretion of the periplasmic cytochromes. The polypeptide is Formate-dependent nitrite reductase complex subunit NrfG (nrfG) (Escherichia coli O157:H7).